A 148-amino-acid chain; its full sequence is uncharacterized protein (148 aa).

An N-terminal signal peptide occupies residues 1 to 20; the sequence is MNLTKLLPAFAAAVVLSACA.

This is an uncharacterized protein from Haemophilus influenzae (strain ATCC 51907 / DSM 11121 / KW20 / Rd).